The following is a 109-amino-acid chain: Globin (109 aa).

Positions 3 to 109 (PLTAAEVSSL…IFPIAGIHAL (107 aa)) constitute a Globin domain.

It belongs to the globin family. As to quaternary structure, monomer.

Oxygen binding protein. This chain is Globin, found in Dicrocoelium dendriticum (Small liver fluke).